Reading from the N-terminus, the 317-residue chain is 4-hydroxy-3-methylbut-2-enyl diphosphate reductase (317 aa).

[4Fe-4S] cluster is bound at residue C12. Residues H41 and H74 each coordinate (2E)-4-hydroxy-3-methylbut-2-enyl diphosphate. 2 residues coordinate dimethylallyl diphosphate: H41 and H74. 2 residues coordinate isopentenyl diphosphate: H41 and H74. C97 contributes to the [4Fe-4S] cluster binding site. H125 serves as a coordination point for (2E)-4-hydroxy-3-methylbut-2-enyl diphosphate. H125 is a dimethylallyl diphosphate binding site. An isopentenyl diphosphate-binding site is contributed by H125. E127 acts as the Proton donor in catalysis. T168 provides a ligand contact to (2E)-4-hydroxy-3-methylbut-2-enyl diphosphate. C198 serves as a coordination point for [4Fe-4S] cluster. Residues S226, S227, N228, and S270 each coordinate (2E)-4-hydroxy-3-methylbut-2-enyl diphosphate. S226, S227, N228, and S270 together coordinate dimethylallyl diphosphate. S226, S227, N228, and S270 together coordinate isopentenyl diphosphate.

Belongs to the IspH family. As to quaternary structure, homodimer. It depends on [4Fe-4S] cluster as a cofactor.

It carries out the reaction isopentenyl diphosphate + 2 oxidized [2Fe-2S]-[ferredoxin] + H2O = (2E)-4-hydroxy-3-methylbut-2-enyl diphosphate + 2 reduced [2Fe-2S]-[ferredoxin] + 2 H(+). The catalysed reaction is dimethylallyl diphosphate + 2 oxidized [2Fe-2S]-[ferredoxin] + H2O = (2E)-4-hydroxy-3-methylbut-2-enyl diphosphate + 2 reduced [2Fe-2S]-[ferredoxin] + 2 H(+). Its pathway is isoprenoid biosynthesis; dimethylallyl diphosphate biosynthesis; dimethylallyl diphosphate from (2E)-4-hydroxy-3-methylbutenyl diphosphate: step 1/1. The protein operates within isoprenoid biosynthesis; isopentenyl diphosphate biosynthesis via DXP pathway; isopentenyl diphosphate from 1-deoxy-D-xylulose 5-phosphate: step 6/6. In terms of biological role, catalyzes the conversion of 1-hydroxy-2-methyl-2-(E)-butenyl 4-diphosphate (HMBPP) into a mixture of isopentenyl diphosphate (IPP) and dimethylallyl diphosphate (DMAPP). Acts in the terminal step of the DOXP/MEP pathway for isoprenoid precursor biosynthesis. The chain is 4-hydroxy-3-methylbut-2-enyl diphosphate reductase from Yersinia enterocolitica serotype O:8 / biotype 1B (strain NCTC 13174 / 8081).